The chain runs to 290 residues: MRIADYSVTKAVLERHGFTFKKSFGQNFLTDTNILQKIVDTAEINKNVNVIEIGPGIGALTEFLAENASEVMAFEIDERLVPILEDTLRDHDNVKVINEDVLKADLQTRVKEFENPDLPIKVVANLPYYITTPILMHLIESKIPFSEFVVMMQKEVADRISAEPNTKAYGSLSIAVQYYMTTKMAFAVPRTVFVPAPNVDSAILKMTRRKQPLVEVKDEDFFFRVSKASFLHRRKTLWNNLTSHFGKSEEVKNKLDQALENAAIKPSIRGEALSISDFARLSDALREAGL.

The S-adenosyl-L-methionine site is built by N27, L29, G54, E75, D100, and N125.

The protein belongs to the class I-like SAM-binding methyltransferase superfamily. rRNA adenine N(6)-methyltransferase family. RsmA subfamily.

It localises to the cytoplasm. It catalyses the reaction adenosine(1518)/adenosine(1519) in 16S rRNA + 4 S-adenosyl-L-methionine = N(6)-dimethyladenosine(1518)/N(6)-dimethyladenosine(1519) in 16S rRNA + 4 S-adenosyl-L-homocysteine + 4 H(+). Specifically dimethylates two adjacent adenosines (A1518 and A1519) in the loop of a conserved hairpin near the 3'-end of 16S rRNA in the 30S particle. May play a critical role in biogenesis of 30S subunits. This Streptococcus thermophilus (strain ATCC BAA-250 / LMG 18311) protein is Ribosomal RNA small subunit methyltransferase A.